Consider the following 425-residue polypeptide: Enolase (425 aa).

Residue glutamine 162 participates in (2R)-2-phosphoglycerate binding. Glutamate 204 serves as the catalytic Proton donor. Residues aspartate 241, glutamate 282, and aspartate 309 each coordinate Mg(2+). Positions 334, 363, 364, and 385 each coordinate (2R)-2-phosphoglycerate. The active-site Proton acceptor is the lysine 334.

This sequence belongs to the enolase family. Requires Mg(2+) as cofactor.

It is found in the cytoplasm. The protein resides in the secreted. Its subcellular location is the cell surface. The enzyme catalyses (2R)-2-phosphoglycerate = phosphoenolpyruvate + H2O. Its pathway is carbohydrate degradation; glycolysis; pyruvate from D-glyceraldehyde 3-phosphate: step 4/5. In terms of biological role, catalyzes the reversible conversion of 2-phosphoglycerate (2-PG) into phosphoenolpyruvate (PEP). It is essential for the degradation of carbohydrates via glycolysis. The chain is Enolase from Corynebacterium diphtheriae (strain ATCC 700971 / NCTC 13129 / Biotype gravis).